Here is a 258-residue protein sequence, read N- to C-terminus: Acetylglutamate kinase (258 aa).

Residues 44 to 45, Arg66, and Asn158 contribute to the substrate site; that span reads GG. ATP is bound by residues 181-186 and 209-211; these read DVSGIL and IIT.

Belongs to the acetylglutamate kinase family. ArgB subfamily. As to quaternary structure, homodimer.

The protein resides in the cytoplasm. The enzyme catalyses N-acetyl-L-glutamate + ATP = N-acetyl-L-glutamyl 5-phosphate + ADP. The protein operates within amino-acid biosynthesis; L-arginine biosynthesis; N(2)-acetyl-L-ornithine from L-glutamate: step 2/4. Its function is as follows. Catalyzes the ATP-dependent phosphorylation of N-acetyl-L-glutamate. The chain is Acetylglutamate kinase from Citrobacter koseri (strain ATCC BAA-895 / CDC 4225-83 / SGSC4696).